We begin with the raw amino-acid sequence, 412 residues long: NAD-dependent dihydropyrimidine dehydrogenase subunit PreT (412 aa).

Residue Glu286 coordinates NAD(+).

This sequence belongs to the NADH dehydrogenase family. As to quaternary structure, heterotetramer of 2 PreA and 2 PreT subunits.

It catalyses the reaction 5,6-dihydrouracil + NAD(+) = uracil + NADH + H(+). It carries out the reaction 5,6-dihydrothymine + NAD(+) = thymine + NADH + H(+). In terms of biological role, involved in pyrimidine base degradation. Catalyzes physiologically the reduction of uracil to 5,6-dihydrouracil (DHU) by using NADH as a specific cosubstrate. It also catalyzes the reverse reaction and the reduction of thymine to 5,6-dihydrothymine (DHT). The chain is NAD-dependent dihydropyrimidine dehydrogenase subunit PreT (preT) from Escherichia coli (strain K12).